Here is a 301-residue protein sequence, read N- to C-terminus: HTH-type transcriptional regulator MtrA (301 aa).

An HTH araC/xylS-type domain is found at 196-297 (KRLGHLIQKV…HVSPGQYRKE (102 aa)). 2 consecutive DNA-binding regions (H-T-H motif) follow at residues 216–237 (DKMVAAANMSRAQLMRRFKSQV) and 264–287 (VLEVALSVGFQSETHFGKAFKRQY).

With respect to regulation, the affinity for the mtrCDE promoter increases 2-fold in the presence of TX-100, a known effector and substrate of the MtrCDE pump. In terms of biological role, involved in the induction of the mtrCDE-encoded efflux pump. Binds specifically to the mtrCDE promoter region. Required for high-level inducible resistance to the detergent Triton X-100 (TX-100) and the spermicide nonoxynol-9 (N-9). The protein is HTH-type transcriptional regulator MtrA of Neisseria gonorrhoeae.